The chain runs to 608 residues: MGKPPRAMTPVEEVDLSAVRYQSPSLQAPHLTGFSLRAFVWLMESPLFGRLLTSVLKSQNNITRMLQDTVIPERPMYLPEYPPQEPEQGVLLLGDDRDPVDRVEEALHCLPPYDPSLRWPAGDKPPFLYWKIRDFAHAYRSGITTPSVVAEHIIAGVEEWSNKKPPMPMLVYFNADDLRKQAEASTKRFQQGNPISILDGIFIAIKDDIDCFPYPSKGATTFFDKIRSVEKDAVCVARLRKCGVLFIGKANMHELGLGVTGNNPNYGTARNPHSIDRYTGGSSSGPAALVSSGLCSAAIGTDGGGSVRIPSSLCGIIGLKTTYGRTDMTGALCDCGTVEVASPLAASVEDALLVYSAIAGSRPMDKLTLRPSPLCVPNLVSPDNNNILGSVKIGKYTEWFHDVSDRDISNTCEDALNLLCSSFGCQIEEIILPELEEMRTAHVVSIGTESFCDLNPHYRAGKRTEFTLDTRTSLALFGSFTSTDYVASQRIRRRIMYYHNEAFKKVDVIATPTTGITAPEIPQSSLKLGESNYVVSAYLMRFVIAGNLLGLPAITVPVGHDKQGLPIGLQLIGRPWGEASLLRVASAIEELCLQKRKRPSAFHDILNA.

Residues lysine 206 and serine 282 each act as charge relay system in the active site. Glycine 303–serine 306 provides a ligand contact to substrate. Serine 306 serves as the catalytic Acyl-ester intermediate.

The protein belongs to the amidase family. As to quaternary structure, forms homodimers.

It is found in the endoplasmic reticulum membrane. It localises to the cell membrane. It catalyses the reaction N-(9Z,12Z-octadecadienoyl)-ethanolamine + H2O = ethanolamine + (9Z,12Z)-octadecadienoate. The catalysed reaction is N-hexadecanoylethanolamine + H2O = ethanolamine + hexadecanoate. It carries out the reaction N-dodecanoylethanolamine + H2O = dodecanoate + ethanolamine. Inhibited by methyl arachidonyl fluorophosphonate (MAFP). In terms of biological role, catalyzes the hydrolysis of bioactive endogenous fatty acid amides to their corresponding acids. The hydrolysis of endogenous amidated lipids terminates their participation as lipid mediators in various signaling systems. Converts a wide range of N-acylethanolamines (NAEs) to their corresponding free fatty acids and ethanolamine. The polypeptide is Fatty acid amide hydrolase (Oryza sativa subsp. japonica (Rice)).